The sequence spans 78 residues: uncharacterized protein (78 aa).

The tract at residues 51–78 is disordered; that stretch reads GGKWDGGGSGGKWNGGGGSGGGSWKKWN.

This is an uncharacterized protein from Dictyostelium discoideum (Social amoeba).